Consider the following 644-residue polypeptide: Exoribonuclease 2 (644 aa).

The RNB domain occupies 189–516 (REDLTALDFV…NHRLLKAVIK (328 aa)). One can recognise an S1 motif domain in the interval 561–643 (DTRFAAEIVD…ETRSIIARPV (83 aa)).

Belongs to the RNR ribonuclease family. RNase II subfamily.

It localises to the cytoplasm. The enzyme catalyses Exonucleolytic cleavage in the 3'- to 5'-direction to yield nucleoside 5'-phosphates.. In terms of biological role, involved in mRNA degradation. Hydrolyzes single-stranded polyribonucleotides processively in the 3' to 5' direction. The protein is Exoribonuclease 2 of Shigella dysenteriae serotype 1 (strain Sd197).